We begin with the raw amino-acid sequence, 70 residues long: MQADIQPNYGDMNATCSCGNVVKTRSTLAKDIHIDVCSECHPFYTGKQKTADTGGRIDRFNKRFGAIKSK.

Zn(2+) is bound by residues Cys16, Cys18, Cys37, and Cys40.

The protein belongs to the bacterial ribosomal protein bL31 family. Type A subfamily. Part of the 50S ribosomal subunit. The cofactor is Zn(2+).

Functionally, binds the 23S rRNA. The chain is Large ribosomal subunit protein bL31 from Saccharophagus degradans (strain 2-40 / ATCC 43961 / DSM 17024).